The sequence spans 337 residues: MKKSLIALTLAALPVAAMADVTLYGTIKAGVETYRTVKHTDGKVTEVKTGSEIADFGSKIGFKGQEDFGNGLKAIWQLEQSASIAGTNSGWGNKQSFIGLKGGFGTVRAGNLNSILKSTGDNVNAWESGKATEDVLQVSKISAPEHRYASVRYDSPEFAGFSGSVQYAPKDNSGANGESYHVGLNYQNSGFFAQYAGLFQRHGEGTKATVGEPVEKLQVHRLVGGYDNDALYASVAVQQQDAKLAAAPNSHNSQTEVAATVAYRFGNVTPRVSYAHGFKGTVAKADGDNRYDQVVVGAEYDFSKRTSALVSAGWLQEGKGAGKTVSTASTVGLRHKF.

The signal sequence occupies residues 1 to 19; sequence MKKSLIALTLAALPVAAMA.

This sequence belongs to the Gram-negative porin family. In terms of assembly, homotrimer.

The protein localises to the cell outer membrane. Serves as a slightly cation selective porin. The polypeptide is Major outer membrane protein P.IB (por) (Neisseria lactamica).